The chain runs to 327 residues: Polyprenyl transferase esdpC (327 aa).

8 helical membrane-spanning segments follow: residues Y35 to S54, L73 to I93, E118 to L138, G140 to G160, Y171 to I191, I202 to A222, V239 to L259, and E307 to S327.

It belongs to the UbiA prenyltransferase family. Mg(2+) serves as cofactor.

The protein localises to the membrane. Its pathway is secondary metabolite biosynthesis; terpenoid biosynthesis. In terms of biological role, olyprenyl transferase; part of the cluster that mediates the biosynthesis of shearones, diterpenoid pyrones (DPs) which are structurally diverse meroterpenoids consisting of a diterpene linked by a pyrone, and which may exhibit a range of bioactivities. Within the pathway, esdpC takes part to the biosynthesis of the molecular scaffold by catalyzing the C-3 geranylgeranylation reaction of the alpha-pyrone produced by esdpA. The molecular scaffold is commonly biosynthesized by a series of enzymes including the non-reducing polyketide synthase (NR-PKS) esdpA that generates an alpha-pyrone; the prenyltransferase esdpC that attaches a geranylgeranyl pyrophosphate (GGPP) produced by the GGPP synthase (GGPPS) esdpD onto the pyrone unit; the FAD-dependent monooxygenase esdpE that converts an olefin on the diterpene unit into an epoxide; and the terpene cyclase esdpB that catalyzes the cyclization reactions to give the molecular backbone shearone A. In the modification steps, esdpF oxidizes the hydroxy group to a ketone at C-3 and esdpG then attaches hydroxy groups at both C-11 and C-12. After that, esdpI hydroxylates at C-20 and esdpH hydroxylates at C-6'. The ether bridge is generated by nucleophilic attack of the hydroxy group at C-20 to the carbonyl carbon at C-3. EsdpH can also functions prior to esdpI. The different combinations of these modification enzymes lead to the production of diverse shearone derivatives, shearone I being the end product of the pathway. The alpha-ketoglutarate-dependent dioxygenase esdpJ seems not to be involved in this pathway. The sequence is that of Polyprenyl transferase esdpC from Penicillium shearii (Eupenicillium shearii).